We begin with the raw amino-acid sequence, 138 residues long: Putative pre-16S rRNA nuclease (138 aa).

Belongs to the YqgF nuclease family.

Its subcellular location is the cytoplasm. Its function is as follows. Could be a nuclease involved in processing of the 5'-end of pre-16S rRNA. This chain is Putative pre-16S rRNA nuclease, found in Geobacillus thermodenitrificans (strain NG80-2).